Here is a 160-residue protein sequence, read N- to C-terminus: MPYVDFWELSRDFLHFASGHHGSNSSVERAVTVSRHNAQGEYNVPLFTAILLIISIATFSALKMGSRQQFLKRAQSLLIFKMKVALQMGGALLTLFASNDGIVEFVRPQRTDEFDLAVCRVVKGETPTATAGALLGRHGSRAGVILRRLRRRITPPFTPP.

This is an uncharacterized protein from Gracula (BFDV).